The chain runs to 180 residues: MMIRNQLYRKCIIGGGRSILNGWVINGTVPNIGLRYLRSGIVTRSNEIKTLEDLSKLKNLDDVDPELIRKLINERTSELNIQNEMEMLKHIQNEERKTQDIPIKRFIRPTWMFLLMSSTFYLLGHYIWWKLEYDEVEKELDRQVTALEEELHNLIEEHRVHGENEAIKNKKHKHWYKFWS.

Residues 1–36 constitute a mitochondrion transit peptide; it reads MMIRNQLYRKCIIGGGRSILNGWVINGTVPNIGLRY. Over 37–105 the chain is Mitochondrial matrix; it reads LRSGIVTRSN…RKTQDIPIKR (69 aa). The chain crosses the membrane as a helical span at residues 106-128; sequence FIRPTWMFLLMSSTFYLLGHYIW. A coiled-coil region spans residues 129–163; the sequence is WKLEYDEVEKELDRQVTALEEELHNLIEEHRVHGE. Over 129 to 180 the chain is Mitochondrial intermembrane; the sequence is WKLEYDEVEKELDRQVTALEEELHNLIEEHRVHGENEAIKNKKHKHWYKFWS.

Belongs to the INA17 family. As to quaternary structure, component of the inner membrane assembly (INA) complex, composed of INA17 and INA22. Interacts with a subset of F(1)F(0)-ATP synthase subunits of the F(1)-domain and the peripheral stalk.

The protein resides in the mitochondrion inner membrane. Its function is as follows. Component of the INA complex (INAC) that promotes the biogenesis of mitochondrial F(1)F(0)-ATP synthase. INAC facilitates the assembly of the peripheral stalk and promotes the assembly of the catalytic F(1)-domain with the membrane-embedded F(0)-domain. The sequence is that of Inner membrane assembly complex subunit 17 from Vanderwaltozyma polyspora (strain ATCC 22028 / DSM 70294 / BCRC 21397 / CBS 2163 / NBRC 10782 / NRRL Y-8283 / UCD 57-17) (Kluyveromyces polysporus).